The chain runs to 344 residues: tRNA N6-adenosine threonylcarbamoyltransferase (344 aa).

Fe cation contacts are provided by His111 and His115. Residues 136–140 (LVSGG), Asp169, Gly182, and Asn279 each bind substrate. Fe cation is bound at residue Asp307.

It belongs to the KAE1 / TsaD family. Fe(2+) serves as cofactor.

The protein resides in the cytoplasm. It carries out the reaction L-threonylcarbamoyladenylate + adenosine(37) in tRNA = N(6)-L-threonylcarbamoyladenosine(37) in tRNA + AMP + H(+). Functionally, required for the formation of a threonylcarbamoyl group on adenosine at position 37 (t(6)A37) in tRNAs that read codons beginning with adenine. Is involved in the transfer of the threonylcarbamoyl moiety of threonylcarbamoyl-AMP (TC-AMP) to the N6 group of A37, together with TsaE and TsaB. TsaD likely plays a direct catalytic role in this reaction. The sequence is that of tRNA N6-adenosine threonylcarbamoyltransferase from Mannheimia succiniciproducens (strain KCTC 0769BP / MBEL55E).